The following is a 168-amino-acid chain: Glycine-rich RNA-binding protein 2 (168 aa).

Residues 8 to 86 enclose the RRM domain; that stretch reads YRCFVGGLAW…RNITVNQAQS (79 aa). Residues 148–168 are disordered; the sequence is GYGGGGGYGGNRGDSGGNWRN.

Functionally, possibly has a role in RNA transcription or processing during stress. The protein is Glycine-rich RNA-binding protein 2 (GRP2) of Sorghum bicolor (Sorghum).